The sequence spans 431 residues: UPF0597 protein BVU_2091 (431 aa).

It belongs to the UPF0597 family.

The polypeptide is UPF0597 protein BVU_2091 (Phocaeicola vulgatus (strain ATCC 8482 / DSM 1447 / JCM 5826 / CCUG 4940 / NBRC 14291 / NCTC 11154) (Bacteroides vulgatus)).